Reading from the N-terminus, the 82-residue chain is Myrmicitoxin(1)-Pm3a (82 aa).

An N-terminal signal peptide occupies residues 1 to 23 (MEIPKLLYIAVIAIGLSGSLTCA). Residues 24–59 (TPLANPLADPEAEAEAKATAEATAEAIAEALAEPEP) constitute a propeptide that is removed on maturation. Leucine amide is present on Leu81.

It belongs to the formicidae venom clade 1 family. As to expression, expressed by the venom gland.

It localises to the secreted. In terms of biological role, toxin that causes a slowly developing temporary paralysis when intrathoracically injected into insects (blowflies). Does not cause spontaneous nocifensive behaviors by intraplantar injection in mice. The polypeptide is Myrmicitoxin(1)-Pm3a (Pogonomyrmex maricopa (Maricopa harvester ant)).